The chain runs to 58 residues: uncharacterized protein (58 aa).

Disordered regions lie at residues 1 to 20 (MKKN…MNKK) and 38 to 58 (IIET…KKQQ).

This is an uncharacterized protein from Bacillus subtilis (strain 168).